Consider the following 369-residue polypeptide: Glutamate 5-kinase (369 aa).

Lys-9 contacts ATP. Residues Ser-49, Asp-136, and Asn-148 each contribute to the substrate site. Residues 168-169 (TD) and 210-216 (TGGMLTK) each bind ATP. Residues 275 to 355 (QGSIWVDKGA…KGVLIYRDDW (81 aa)) form the PUA domain.

It belongs to the glutamate 5-kinase family.

It is found in the cytoplasm. It carries out the reaction L-glutamate + ATP = L-glutamyl 5-phosphate + ADP. It participates in amino-acid biosynthesis; L-proline biosynthesis; L-glutamate 5-semialdehyde from L-glutamate: step 1/2. Functionally, catalyzes the transfer of a phosphate group to glutamate to form L-glutamate 5-phosphate. This Streptococcus pneumoniae (strain ATCC 700669 / Spain 23F-1) protein is Glutamate 5-kinase.